The sequence spans 229 residues: Peptidase E (229 aa).

Catalysis depends on charge relay system residues Ser-120, Asp-135, and His-157.

It belongs to the peptidase S51 family.

It localises to the cytoplasm. The enzyme catalyses Dipeptidase E catalyzes the hydrolysis of dipeptides Asp-|-Xaa. It does not act on peptides with N-terminal Glu, Asn or Gln, nor does it cleave isoaspartyl peptides.. In terms of biological role, hydrolyzes dipeptides containing N-terminal aspartate residues. May play a role in allowing the cell to use peptide aspartate to spare carbon otherwise required for the synthesis of the aspartate family of amino acids. This Salmonella newport (strain SL254) protein is Peptidase E.